A 297-amino-acid chain; its full sequence is 33 kDa chaperonin (297 aa).

Cystine bridges form between Cys-239–Cys-241 and Cys-272–Cys-275.

This sequence belongs to the HSP33 family. Under oxidizing conditions two disulfide bonds are formed involving the reactive cysteines. Under reducing conditions zinc is bound to the reactive cysteines and the protein is inactive.

The protein localises to the cytoplasm. Redox regulated molecular chaperone. Protects both thermally unfolding and oxidatively damaged proteins from irreversible aggregation. Plays an important role in the bacterial defense system toward oxidative stress. In Synechococcus elongatus (strain ATCC 33912 / PCC 7942 / FACHB-805) (Anacystis nidulans R2), this protein is 33 kDa chaperonin.